Reading from the N-terminus, the 488-residue chain is Zinc metalloproteinase-disintegrin VMP-II (488 aa).

The N-terminal stretch at 1–20 (MIQVLLVTICLAVFPYQGSS) is a signal peptide. Positions 21–191 (IILESGNVND…KASQSNIPPE (171 aa)) are excised as a propeptide. The Peptidase M12B domain maps to 198–396 (RYIELVVVAD…STTRCLHNEP (199 aa)). Positions 201 and 285 each coordinate Ca(2+). Residue Asn296 is glycosylated (N-linked (GlcNAc...) asparagine). Cystine bridges form between Cys309–Cys391, Cys349–Cys373, and Cys351–Cys356. Residue His334 coordinates Zn(2+). The active site involves Glu335. 2 residues coordinate Zn(2+): His338 and His344. Cys391, Asn394, Asn409, Glu413, Glu416, and Asp419 together coordinate Ca(2+). The Disintegrin domain occupies 404–488 (PPFCGNYFKE…ADCPRNGLYG (85 aa)). Disulfide bonds link Cys407–Cys426, Cys418–Cys436, Cys420–Cys431, Cys430–Cys453, Cys444–Cys450, Cys449–Cys474, and Cys462–Cys481. Residues 466 to 468 (RGD) carry the Cell attachment site motif.

This sequence belongs to the venom metalloproteinase (M12B) family. P-II subfamily. P-IIb sub-subfamily. Homodimer; disulfide-linked (disintegrin). The cofactor is Zn(2+). In terms of tissue distribution, expressed by the venom gland.

Its subcellular location is the secreted. Functionally, zinc metalloproteinase-disintegrin VMP-II: inhibits ADP-induced platelet aggregation (probably by binding integrin alpha-IIb/beta-3 (ITGA2B/ITGB3)) and degrades fibrinogen. Recombinant disintegrin r-Cam-dis (413-488): this recombinant protein inhibits platelet adhesion to fibrinogen (IC(50) is 1 nM), inhibits collagen- (IC(50) is 18 nM) and ADP-induced (IC(50) is 6 nM) platelet aggregation, and also inhibits platelet function on clot retraction. May act by binding integrin alpha-IIb/beta-3 (ITGA2B/ITGB3). The chain is Zinc metalloproteinase-disintegrin VMP-II from Crotalus adamanteus (Eastern diamondback rattlesnake).